The chain runs to 317 residues: Acetyl-coenzyme A carboxylase carboxyl transferase subunit alpha (317 aa).

Residues 40–293 (LEVRVREAIV…GDVIANALGE (254 aa)) form the CoA carboxyltransferase C-terminal domain.

Belongs to the AccA family. As to quaternary structure, acetyl-CoA carboxylase is a heterohexamer composed of biotin carboxyl carrier protein (AccB), biotin carboxylase (AccC) and two subunits each of ACCase subunit alpha (AccA) and ACCase subunit beta (AccD).

The protein resides in the cytoplasm. The catalysed reaction is N(6)-carboxybiotinyl-L-lysyl-[protein] + acetyl-CoA = N(6)-biotinyl-L-lysyl-[protein] + malonyl-CoA. It participates in lipid metabolism; malonyl-CoA biosynthesis; malonyl-CoA from acetyl-CoA: step 1/1. In terms of biological role, component of the acetyl coenzyme A carboxylase (ACC) complex. First, biotin carboxylase catalyzes the carboxylation of biotin on its carrier protein (BCCP) and then the CO(2) group is transferred by the carboxyltransferase to acetyl-CoA to form malonyl-CoA. The sequence is that of Acetyl-coenzyme A carboxylase carboxyl transferase subunit alpha from Rhizobium etli (strain ATCC 51251 / DSM 11541 / JCM 21823 / NBRC 15573 / CFN 42).